Consider the following 319-residue polypeptide: Sulfate adenylyltransferase subunit 2 (319 aa).

This sequence belongs to the PAPS reductase family. CysD subfamily. As to quaternary structure, heterodimer composed of CysD, the smaller subunit, and CysN.

It catalyses the reaction sulfate + ATP + H(+) = adenosine 5'-phosphosulfate + diphosphate. It functions in the pathway sulfur metabolism; hydrogen sulfide biosynthesis; sulfite from sulfate: step 1/3. With CysN forms the ATP sulfurylase (ATPS) that catalyzes the adenylation of sulfate producing adenosine 5'-phosphosulfate (APS) and diphosphate, the first enzymatic step in sulfur assimilation pathway. APS synthesis involves the formation of a high-energy phosphoric-sulfuric acid anhydride bond driven by GTP hydrolysis by CysN coupled to ATP hydrolysis by CysD. The chain is Sulfate adenylyltransferase subunit 2 from Methylobacterium radiotolerans (strain ATCC 27329 / DSM 1819 / JCM 2831 / NBRC 15690 / NCIMB 10815 / 0-1).